The primary structure comprises 510 residues: NAD(P)H-quinone oxidoreductase subunit 2 B, chloroplastic (510 aa).

Helical transmembrane passes span 24–44 (LLLF…GLIL), 57–77 (IPWL…ALLF), 99–119 (IFQF…VEYI), 124–144 (MAIT…MFLC), 149–169 (LITI…LSGY), 183–203 (YLLM…WLYG), 227–247 (PGIS…LSLA), 295–315 (WHLL…LIAI), 323–343 (MLAY…IVGD), 354–374 (YMLF…LFGL), 395–415 (ALSL…AGFF), 418–438 (LHLF…IGLL), and 484–504 (MIVC…IIAI).

This sequence belongs to the complex I subunit 2 family. In terms of assembly, NDH is composed of at least 16 different subunits, 5 of which are encoded in the nucleus.

Its subcellular location is the plastid. The protein localises to the chloroplast thylakoid membrane. The catalysed reaction is a plastoquinone + NADH + (n+1) H(+)(in) = a plastoquinol + NAD(+) + n H(+)(out). The enzyme catalyses a plastoquinone + NADPH + (n+1) H(+)(in) = a plastoquinol + NADP(+) + n H(+)(out). Its function is as follows. NDH shuttles electrons from NAD(P)H:plastoquinone, via FMN and iron-sulfur (Fe-S) centers, to quinones in the photosynthetic chain and possibly in a chloroplast respiratory chain. The immediate electron acceptor for the enzyme in this species is believed to be plastoquinone. Couples the redox reaction to proton translocation, and thus conserves the redox energy in a proton gradient. This is NAD(P)H-quinone oxidoreductase subunit 2 B, chloroplastic from Citrus sinensis (Sweet orange).